The chain runs to 118 residues: Holo-[acyl-carrier-protein] synthase (118 aa).

The Mg(2+) site is built by aspartate 8 and glutamate 57.

The protein belongs to the P-Pant transferase superfamily. AcpS family. Mg(2+) is required as a cofactor.

The protein resides in the cytoplasm. It carries out the reaction apo-[ACP] + CoA = holo-[ACP] + adenosine 3',5'-bisphosphate + H(+). Its function is as follows. Transfers the 4'-phosphopantetheine moiety from coenzyme A to a Ser of acyl-carrier-protein. This is Holo-[acyl-carrier-protein] synthase from Acholeplasma laidlawii (strain PG-8A).